Consider the following 332-residue polypeptide: Aspartate carbamoyltransferase catalytic subunit (332 aa).

The carbamoyl phosphate site is built by Arg78 and Thr79. An L-aspartate-binding site is contributed by Lys106. Carbamoyl phosphate-binding residues include Arg128, His156, and Gln159. L-aspartate-binding residues include Arg189 and Arg243. Carbamoyl phosphate contacts are provided by Gly284 and Pro285.

Belongs to the aspartate/ornithine carbamoyltransferase superfamily. ATCase family. In terms of assembly, heterododecamer (2C3:3R2) of six catalytic PyrB chains organized as two trimers (C3), and six regulatory PyrI chains organized as three dimers (R2).

The enzyme catalyses carbamoyl phosphate + L-aspartate = N-carbamoyl-L-aspartate + phosphate + H(+). It functions in the pathway pyrimidine metabolism; UMP biosynthesis via de novo pathway; (S)-dihydroorotate from bicarbonate: step 2/3. Its function is as follows. Catalyzes the condensation of carbamoyl phosphate and aspartate to form carbamoyl aspartate and inorganic phosphate, the committed step in the de novo pyrimidine nucleotide biosynthesis pathway. This is Aspartate carbamoyltransferase catalytic subunit from Caulobacter vibrioides (strain ATCC 19089 / CIP 103742 / CB 15) (Caulobacter crescentus).